We begin with the raw amino-acid sequence, 86 residues long: Probable weak neurotoxin NNAM2 (86 aa).

The N-terminal stretch at 1–21 (MKTLLLTLVVVTIVCLDLGYT) is a signal peptide. 5 disulfides stabilise this stretch: Cys-24–Cys-45, Cys-27–Cys-32, Cys-38–Cys-63, Cys-67–Cys-78, and Cys-79–Cys-84.

It belongs to the three-finger toxin family. Ancestral subfamily. Orphan group II sub-subfamily. As to expression, expressed by the venom gland.

It localises to the secreted. In terms of biological role, binds with low affinity to muscular (alpha-1-beta-1-delta-epsilon/CHRNA1-CHRNB1-CHRND-CHRNE) and very low affinity to neuronal (alpha-7/CHRNA7) nicotinic acetylcholine receptor (nAChR). In Naja atra (Chinese cobra), this protein is Probable weak neurotoxin NNAM2.